The chain runs to 436 residues: UDP-N-acetylmuramoylalanine--D-glutamate ligase (436 aa).

Residue 112–118 (GSNGKST) coordinates ATP.

This sequence belongs to the MurCDEF family.

It localises to the cytoplasm. The enzyme catalyses UDP-N-acetyl-alpha-D-muramoyl-L-alanine + D-glutamate + ATP = UDP-N-acetyl-alpha-D-muramoyl-L-alanyl-D-glutamate + ADP + phosphate + H(+). It participates in cell wall biogenesis; peptidoglycan biosynthesis. Functionally, cell wall formation. Catalyzes the addition of glutamate to the nucleotide precursor UDP-N-acetylmuramoyl-L-alanine (UMA). The protein is UDP-N-acetylmuramoylalanine--D-glutamate ligase of Photorhabdus laumondii subsp. laumondii (strain DSM 15139 / CIP 105565 / TT01) (Photorhabdus luminescens subsp. laumondii).